The chain runs to 258 residues: Indole-3-glycerol phosphate synthase (258 aa).

The protein belongs to the TrpC family.

The enzyme catalyses 1-(2-carboxyphenylamino)-1-deoxy-D-ribulose 5-phosphate + H(+) = (1S,2R)-1-C-(indol-3-yl)glycerol 3-phosphate + CO2 + H2O. It functions in the pathway amino-acid biosynthesis; L-tryptophan biosynthesis; L-tryptophan from chorismate: step 4/5. The polypeptide is Indole-3-glycerol phosphate synthase (Legionella pneumophila (strain Lens)).